A 64-amino-acid polypeptide reads, in one-letter code: Large ribosomal subunit protein bL28 (64 aa).

The protein belongs to the bacterial ribosomal protein bL28 family.

The polypeptide is Large ribosomal subunit protein bL28 (Elusimicrobium minutum (strain Pei191)).